Consider the following 146-residue polypeptide: Phospholipase A2, membrane associated (146 aa).

The N-terminal stretch at 1 to 21 (MKVLLLLAVVIMAFGSIQVQG) is a signal peptide. Cystine bridges form between Cys-47–Cys-139, Cys-49–Cys-65, Cys-64–Cys-119, Cys-70–Cys-146, Cys-71–Cys-112, Cys-80–Cys-105, and Cys-98–Cys-110. His-48, Gly-50, and Gly-52 together coordinate Ca(2+). Residue His-68 is part of the active site. Asp-69 is a Ca(2+) binding site. Residue Asp-113 is part of the active site.

This sequence belongs to the phospholipase A2 family. Requires Ca(2+) as cofactor.

It is found in the secreted. Its subcellular location is the cell membrane. The protein localises to the mitochondrion outer membrane. It carries out the reaction a 1,2-diacyl-sn-glycero-3-phosphoethanolamine + H2O = a 1-acyl-sn-glycero-3-phosphoethanolamine + a fatty acid + H(+). The catalysed reaction is 1-hexadecanoyl-2-(9Z-octadecenoyl)-sn-glycero-3-phosphoethanolamine + H2O = 1-hexadecanoyl-sn-glycero-3-phosphoethanolamine + (9Z)-octadecenoate + H(+). The enzyme catalyses 1-hexadecanoyl-2-(9Z,12Z-octadecadienoyl)-sn-glycero-3-phosphoethanolamine + H2O = 1-hexadecanoyl-sn-glycero-3-phosphoethanolamine + (9Z,12Z)-octadecadienoate + H(+). It catalyses the reaction 1-hexadecanoyl-2-(5Z,8Z,11Z,14Z-eicosatetraenoyl)-sn-glycero-3-phosphoethanolamine + H2O = 1-hexadecanoyl-sn-glycero-3-phosphoethanolamine + (5Z,8Z,11Z,14Z)-eicosatetraenoate + H(+). It carries out the reaction N-hexadecanoyl-1,2-di-(9Z-octadecenoyl)-sn-glycero-3-phosphoethanolamine + H2O = N-hexadecanoyl-1-(9Z-octadecenoyl)-sn-glycero-3-phosphoethanolamine + (9Z)-octadecenoate + H(+). The catalysed reaction is 1,2-dihexadecanoyl-sn-glycero-3-phospho-(1'-sn-glycerol) + H2O = 1-hexadecanoyl-sn-glycero-3-phospho-(1'-sn-glycerol) + hexadecanoate + H(+). The enzyme catalyses 1-hexadecanoyl-2-(9Z-octadecenoyl)-sn-glycero-3-phosphoglycerol + H2O = 1-hexadecanoyl-sn-glycero-3-phosphoglycerol + (9Z)-octadecenoate + H(+). It catalyses the reaction 1-hexadecanoyl-2-(9Z-octadecenoyl)-sn-glycero-3-phospho-(1'-sn-glycerol) + H2O = 1-hexadecanoyl-sn-glycero-3-phospho-(1'-sn-glycerol) + (9Z)-octadecenoate + H(+). It carries out the reaction a 1,2-diacyl-sn-glycero-3-phosphocholine + H2O = a 1-acyl-sn-glycero-3-phosphocholine + a fatty acid + H(+). The catalysed reaction is 1,2-dihexadecanoyl-sn-glycero-3-phosphocholine + H2O = 1-hexadecanoyl-sn-glycero-3-phosphocholine + hexadecanoate + H(+). The enzyme catalyses 1-hexadecanoyl-2-(9Z-octadecenoyl)-sn-glycero-3-phosphocholine + H2O = 1-hexadecanoyl-sn-glycero-3-phosphocholine + (9Z)-octadecenoate + H(+). It catalyses the reaction 1-hexadecanoyl-2-(9Z,12Z-octadecadienoyl)-sn-glycero-3-phosphocholine + H2O = (9Z,12Z)-octadecadienoate + 1-hexadecanoyl-sn-glycero-3-phosphocholine + H(+). It carries out the reaction 1-hexadecanoyl-2-(4Z,7Z,10Z,13Z,16Z,19Z-docosahexaenoyl)-sn-glycero-3-phosphocholine + H2O = (4Z,7Z,10Z,13Z,16Z,19Z)-docosahexaenoate + 1-hexadecanoyl-sn-glycero-3-phosphocholine + H(+). Secretory calcium-dependent phospholipase A2 that primarily targets extracellular phospholipids with implications in host antimicrobial defense, inflammatory response and tissue regeneration. Hydrolyzes the ester bond of the fatty acyl group attached at sn-2 position of phospholipids (phospholipase A2 activity) with preference for phosphatidylethanolamines and phosphatidylglycerols over phosphatidylcholines. Contributes to lipid remodeling of cellular membranes and generation of lipid mediators involved in pathogen clearance. Displays bactericidal activity against Gram-positive bacteria by directly hydrolyzing phospholipids of the bacterial membrane. Upon sterile inflammation, targets membrane phospholipids of extracellular mitochondria released from activated platelets, generating free unsaturated fatty acids such as arachidonate that is used by neighboring leukocytes to synthesize inflammatory eicosanoids such as leukotrienes. Simultaneously, by compromising mitochondrial membrane integrity, promotes the release in circulation of potent damage-associated molecular pattern molecules that activate the innate immune response. Plays a stem cell regulator role in the intestinal crypt. Within intracellular compartment mediates Paneth cell differentiation and its stem cell supporting functions by inhibiting Wnt signaling pathway in intestinal stem cell (ICS). Secreted in the intestinal lumen upon inflammation, acts in an autocrine way and promotes prostaglandin E2 synthesis that stimulates Wnt signaling pathway in ICS cells and tissue regeneration. May play a role in the biosynthesis of N-acyl ethanolamines that regulate energy metabolism and inflammation. Hydrolyzes N-acyl phosphatidylethanolamines to N-acyl lysophosphatidylethanolamines, which are further cleaved by a lysophospholipase D to release N-acyl ethanolamines. Independent of its catalytic activity, acts as a ligand for integrins. Binds to and activates integrins ITGAV:ITGB3, ITGA4:ITGB1 and ITGA5:ITGB1. Binds to a site (site 2) which is distinct from the classical ligand-binding site (site 1) and induces integrin conformational changes and enhanced ligand binding to site 1. Induces cell proliferation in an integrin-dependent manner. The chain is Phospholipase A2, membrane associated (Pla2g2a) from Rattus norvegicus (Rat).